A 573-amino-acid chain; its full sequence is DNA ligase (573 aa).

Glutamate 250 serves as a coordination point for ATP. Residue lysine 252 is the N6-AMP-lysine intermediate of the active site. ATP contacts are provided by arginine 257, arginine 272, glutamate 301, phenylalanine 342, arginine 432, and lysine 438.

It belongs to the ATP-dependent DNA ligase family. Mg(2+) is required as a cofactor.

It carries out the reaction ATP + (deoxyribonucleotide)n-3'-hydroxyl + 5'-phospho-(deoxyribonucleotide)m = (deoxyribonucleotide)n+m + AMP + diphosphate.. In terms of biological role, DNA ligase that seals nicks in double-stranded DNA during DNA replication, DNA recombination and DNA repair. In Methanococcus maripaludis (strain C5 / ATCC BAA-1333), this protein is DNA ligase.